The following is a 320-amino-acid chain: Malate dehydrogenase (320 aa).

NAD(+) is bound by residues 10 to 15 (GAGNIG) and D34. Substrate-binding residues include R83 and R89. NAD(+) is bound by residues N96 and 119–121 (ITN). Substrate is bound by residues N121 and R152. H176 serves as the catalytic Proton acceptor.

This sequence belongs to the LDH/MDH superfamily. MDH type 3 family.

The catalysed reaction is (S)-malate + NAD(+) = oxaloacetate + NADH + H(+). Catalyzes the reversible oxidation of malate to oxaloacetate. The protein is Malate dehydrogenase of Novosphingobium aromaticivorans (strain ATCC 700278 / DSM 12444 / CCUG 56034 / CIP 105152 / NBRC 16084 / F199).